Consider the following 131-residue polypeptide: Small ribosomal subunit protein uS8 (131 aa).

Belongs to the universal ribosomal protein uS8 family. As to quaternary structure, part of the 30S ribosomal subunit. Contacts proteins S5 and S12.

In terms of biological role, one of the primary rRNA binding proteins, it binds directly to 16S rRNA central domain where it helps coordinate assembly of the platform of the 30S subunit. The polypeptide is Small ribosomal subunit protein uS8 (Sulfurimonas denitrificans (strain ATCC 33889 / DSM 1251) (Thiomicrospira denitrificans (strain ATCC 33889 / DSM 1251))).